The primary structure comprises 833 residues: ERAD-associated E3 ubiquitin-protein ligase component HRD3 (833 aa).

The signal sequence occupies residues 1–19 (MLLSTYLNWASVLLTIAGA). Asparagine 105, asparagine 127, and asparagine 146 each carry an N-linked (GlcNAc...) asparagine glycan. The Sel1-like 1 repeat unit spans residues 107-143 (TEAMYKLSQINLWGQYGYPHNKSVAFQYLQKFNDMTS). Sel1-like repeat units lie at residues 147 to 184 (SSALFDLAVAYSTGLFGTLPVDVARGLLYFQRSARLGD) and 185 to 220 (LKAKQVLAYRYFSGYSVARDVDKALLLYKEIAEEIK). Asparagine 424 and asparagine 607 each carry an N-linked (GlcNAc...) asparagine glycan. 2 Sel1-like repeats span residues 592–623 (TDAAVVAGDIYFQMKNYTKALSLYQSAALKFS) and 624–659 (AQALWNIGYMYEHGLGVEKDFHLAKRFYDQILEHNQ). N-linked (GlcNAc...) asparagine glycans are attached at residues asparagine 688 and asparagine 713. The helical transmembrane segment at 752–772 (LLTMVCVLIIFAISMFFRTVA) threads the bilayer. Positions 789–818 (GNALGEEGNPENENEEDDENDDEGRARARN) are disordered. A compositionally biased stretch (acidic residues) spans 796 to 810 (GNPENENEEDDENDD).

It belongs to the sel-1 family. In terms of assembly, interacts with HRD1.

The protein localises to the endoplasmic reticulum membrane. Functionally, component of the endoplasmic reticulum quality control (ERQC) system involved in ubiquitin-dependent degradation of missfolded endoplasmic reticulum proteins. Component of the HRD1 ubiquitin ligase complex, which is part of the ERAD-L and ERAD-M pathways responsible for the rapid degradation of soluble lumenal and membrane proteins with misfolded lumenal domains (ERAD-L), or ER-membrane proteins with misfolded transmembrane domains (ERAD-M). ERAD-L substrates are ubiquitinated through HRD1 in conjunction with the E2 ubiquitin-conjugating enzymes UBC1 and UBC7-CUE1. Ubiquitinated substrates are then removed to the cytosol via the action of the UFD1-NPL4-CDC48/p97 (UNC) AAA ATPase complex and targeted to the proteasome. ERAD-M substrates are processed by the same HRD1-HRD3 core complex, but only a subset of the other components is required for ERAD-M. Stabilizes the HRD1 ubiquitin-protein ligase. Also has a function in recruiting misfolded protein substrates. The sequence is that of ERAD-associated E3 ubiquitin-protein ligase component HRD3 (HRD3) from Candida glabrata (strain ATCC 2001 / BCRC 20586 / JCM 3761 / NBRC 0622 / NRRL Y-65 / CBS 138) (Yeast).